The chain runs to 219 residues: Redox-sensing transcriptional repressor Rex (219 aa).

Positions 17–56 (RYLRYVEDLLNHDIMRISSSELSQRMGYTASQVRQDFNNF) form a DNA-binding region, H-T-H motif. 91 to 96 (GVGNLG) is a binding site for NAD(+).

This sequence belongs to the transcriptional regulatory Rex family. As to quaternary structure, homodimer.

The protein resides in the cytoplasm. Modulates transcription in response to changes in cellular NADH/NAD(+) redox state. In Caldicellulosiruptor saccharolyticus (strain ATCC 43494 / DSM 8903 / Tp8T 6331), this protein is Redox-sensing transcriptional repressor Rex.